The primary structure comprises 352 residues: Holliday junction branch migration complex subunit RuvB (352 aa).

A large ATPase domain (RuvB-L) region spans residues 4–185 (PDRLISAVSG…FGIVQRLEFY (182 aa)). Residues Ile-24, Arg-25, Gly-66, Lys-69, Thr-70, Thr-71, 132–134 (EDF), Arg-175, Tyr-185, and Arg-222 contribute to the ATP site. A Mg(2+)-binding site is contributed by Thr-70. Residues 186 to 256 (NVEDLATIVS…IADKALNLLD (71 aa)) form a small ATPAse domain (RuvB-S) region. Residues 259–352 (ERGFDHLDRR…TDLFTSEDGN (94 aa)) are head domain (RuvB-H). DNA is bound by residues Arg-295, Arg-314, and Arg-319.

It belongs to the RuvB family. In terms of assembly, homohexamer. Forms an RuvA(8)-RuvB(12)-Holliday junction (HJ) complex. HJ DNA is sandwiched between 2 RuvA tetramers; dsDNA enters through RuvA and exits via RuvB. An RuvB hexamer assembles on each DNA strand where it exits the tetramer. Each RuvB hexamer is contacted by two RuvA subunits (via domain III) on 2 adjacent RuvB subunits; this complex drives branch migration. In the full resolvosome a probable DNA-RuvA(4)-RuvB(12)-RuvC(2) complex forms which resolves the HJ.

Its subcellular location is the cytoplasm. It catalyses the reaction ATP + H2O = ADP + phosphate + H(+). In terms of biological role, the RuvA-RuvB-RuvC complex processes Holliday junction (HJ) DNA during genetic recombination and DNA repair, while the RuvA-RuvB complex plays an important role in the rescue of blocked DNA replication forks via replication fork reversal (RFR). RuvA specifically binds to HJ cruciform DNA, conferring on it an open structure. The RuvB hexamer acts as an ATP-dependent pump, pulling dsDNA into and through the RuvAB complex. RuvB forms 2 homohexamers on either side of HJ DNA bound by 1 or 2 RuvA tetramers; 4 subunits per hexamer contact DNA at a time. Coordinated motions by a converter formed by DNA-disengaged RuvB subunits stimulates ATP hydrolysis and nucleotide exchange. Immobilization of the converter enables RuvB to convert the ATP-contained energy into a lever motion, pulling 2 nucleotides of DNA out of the RuvA tetramer per ATP hydrolyzed, thus driving DNA branch migration. The RuvB motors rotate together with the DNA substrate, which together with the progressing nucleotide cycle form the mechanistic basis for DNA recombination by continuous HJ branch migration. Branch migration allows RuvC to scan DNA until it finds its consensus sequence, where it cleaves and resolves cruciform DNA. The protein is Holliday junction branch migration complex subunit RuvB of Pseudomonas aeruginosa (strain LESB58).